Reading from the N-terminus, the 234-residue chain is NAD-dependent protein deacylase (234 aa).

The 234-residue stretch at 1–234 (MKNLVILSGA…IEMASQEMLK (234 aa)) folds into the Deacetylase sirtuin-type domain. 9–28 (GAGISAESGIKTFRDAGGLW) is an NAD(+) binding site. The substrate site is built by Tyr-53 and Arg-56. 86-89 (QNVD) contributes to the NAD(+) binding site. The Proton acceptor role is filled by His-104. NAD(+) is bound by residues 169 to 171 (GTS) and Met-217.

It belongs to the sirtuin family. Class III subfamily.

The protein resides in the cytoplasm. It carries out the reaction N(6)-acetyl-L-lysyl-[protein] + NAD(+) + H2O = 2''-O-acetyl-ADP-D-ribose + nicotinamide + L-lysyl-[protein]. The enzyme catalyses N(6)-succinyl-L-lysyl-[protein] + NAD(+) + H2O = 2''-O-succinyl-ADP-D-ribose + nicotinamide + L-lysyl-[protein]. Its function is as follows. NAD-dependent lysine deacetylase and desuccinylase that specifically removes acetyl and succinyl groups on target proteins. Modulates the activities of several proteins which are inactive in their acylated form. The sequence is that of NAD-dependent protein deacylase from Helicobacter pylori (strain J99 / ATCC 700824) (Campylobacter pylori J99).